The following is a 432-amino-acid chain: Teosinte glume architecture 1 (432 aa).

2 disordered regions span residues 20–55 (HAAAAPSSGGHAANAAAAGTGTESRPPAPGAAGAPA) and 68–102 (ECEPGAARREREAAAGAAKRPRPAGPGGQQQQQQC). The span at 22-41 (AAAPSSGGHAANAAAAGTGT) shows a compositional bias: low complexity. Residues 102-179 (CPSCAVDGCR…DGHNRRRRKP (78 aa)) form an SBP-type zinc finger. C105, C110, C127, H130, C146, C149, H153, and C165 together coordinate Zn(2+). The segment covering 409-420 (GGGSGGGEGSSD) has biased composition (gly residues). The segment at 409–432 (GGGSGGGEGSSDGGTSSSMPFSWQ) is disordered.

Monomer and homodimer. Strongly expressed in immature ears and weakly in husks. Found in the inflorescence meristem of the developing ear, in the spikelet pair primordia, the glume primordia, the cupule forming region and other floral organs. Not detected in other tissues.

SBP transcriptional regulator probably involved in the domestication of maize. Acts as a transcriptional repressor binding to a 5'-GTAC-3' motif. May repress the growth of lateral branches in length and numbers. The polypeptide is Teosinte glume architecture 1 (Zea mays (Maize)).